A 297-amino-acid polypeptide reads, in one-letter code: Nucleotide-binding protein Bsph_0448 (297 aa).

19–26 (GMSGAGKT) is a binding site for ATP. GTP is bound at residue 70–73 (DMRG).

It belongs to the RapZ-like family.

In terms of biological role, displays ATPase and GTPase activities. The sequence is that of Nucleotide-binding protein Bsph_0448 from Lysinibacillus sphaericus (strain C3-41).